Consider the following 150-residue polypeptide: Large ribosomal subunit protein bL9 (150 aa).

This sequence belongs to the bacterial ribosomal protein bL9 family.

Its function is as follows. Binds to the 23S rRNA. This chain is Large ribosomal subunit protein bL9, found in Wolinella succinogenes (strain ATCC 29543 / DSM 1740 / CCUG 13145 / JCM 31913 / LMG 7466 / NCTC 11488 / FDC 602W) (Vibrio succinogenes).